The sequence spans 334 residues: Holliday junction branch migration complex subunit RuvB (334 aa).

The tract at residues 1–182 (MDDRMVDQSM…FGVHLRLEYY (182 aa)) is large ATPase domain (RuvB-L). ATP is bound by residues Leu-21, Arg-22, Gly-63, Lys-66, Thr-67, Thr-68, 129–131 (EDF), Arg-172, Tyr-182, and Arg-219. A Mg(2+)-binding site is contributed by Thr-67. Positions 183–253 (QELELKEIIV…TTRASLQLLQ (71 aa)) are small ATPAse domain (RuvB-S). The head domain (RuvB-H) stretch occupies residues 256-334 (DEGLDYIDHK…HFSKKNGKKE (79 aa)). Arg-292, Arg-311, and Arg-316 together coordinate DNA.

The protein belongs to the RuvB family. Homohexamer. Forms an RuvA(8)-RuvB(12)-Holliday junction (HJ) complex. HJ DNA is sandwiched between 2 RuvA tetramers; dsDNA enters through RuvA and exits via RuvB. An RuvB hexamer assembles on each DNA strand where it exits the tetramer. Each RuvB hexamer is contacted by two RuvA subunits (via domain III) on 2 adjacent RuvB subunits; this complex drives branch migration. In the full resolvosome a probable DNA-RuvA(4)-RuvB(12)-RuvC(2) complex forms which resolves the HJ.

It localises to the cytoplasm. It carries out the reaction ATP + H2O = ADP + phosphate + H(+). In terms of biological role, the RuvA-RuvB-RuvC complex processes Holliday junction (HJ) DNA during genetic recombination and DNA repair, while the RuvA-RuvB complex plays an important role in the rescue of blocked DNA replication forks via replication fork reversal (RFR). RuvA specifically binds to HJ cruciform DNA, conferring on it an open structure. The RuvB hexamer acts as an ATP-dependent pump, pulling dsDNA into and through the RuvAB complex. RuvB forms 2 homohexamers on either side of HJ DNA bound by 1 or 2 RuvA tetramers; 4 subunits per hexamer contact DNA at a time. Coordinated motions by a converter formed by DNA-disengaged RuvB subunits stimulates ATP hydrolysis and nucleotide exchange. Immobilization of the converter enables RuvB to convert the ATP-contained energy into a lever motion, pulling 2 nucleotides of DNA out of the RuvA tetramer per ATP hydrolyzed, thus driving DNA branch migration. The RuvB motors rotate together with the DNA substrate, which together with the progressing nucleotide cycle form the mechanistic basis for DNA recombination by continuous HJ branch migration. Branch migration allows RuvC to scan DNA until it finds its consensus sequence, where it cleaves and resolves cruciform DNA. The chain is Holliday junction branch migration complex subunit RuvB from Staphylococcus saprophyticus subsp. saprophyticus (strain ATCC 15305 / DSM 20229 / NCIMB 8711 / NCTC 7292 / S-41).